Reading from the N-terminus, the 239-residue chain is Ribosomal RNA small subunit methyltransferase G (239 aa).

Residues glycine 77, phenylalanine 82, 128–129 (AE), and arginine 146 contribute to the S-adenosyl-L-methionine site. A disordered region spans residues 217-239 (RRQTSKKYPRKPGTPNKSPLVES).

Belongs to the methyltransferase superfamily. RNA methyltransferase RsmG family.

The protein localises to the cytoplasm. Its function is as follows. Specifically methylates the N7 position of guanine in position 535 of 16S rRNA. The chain is Ribosomal RNA small subunit methyltransferase G from Staphylococcus epidermidis (strain ATCC 12228 / FDA PCI 1200).